The chain runs to 409 residues: Serine/threonine transporter SstT (409 aa).

9 consecutive transmembrane segments (helical) span residues 24-44, 48-68, 82-102, 142-162, 194-214, 218-238, 292-312, 319-339, and 365-385; these read LALGIVIGSVSPQLGLAAGLF, FVGALKAVAPVLVFILVAATI, IIVLYLIGTFSAALTAVIAGM, AIANANYIGILAWALVLGAAL, LGIFGLVSSTIAETGFGALAG, LLAVLLGCMAFIALVVNPAIV, IPLGATVNMGGAAITITVLAM, GIQVDFATALLLSLVATVSAC, and VAMQVVAVGFIIGVIQDSAET.

It belongs to the dicarboxylate/amino acid:cation symporter (DAACS) (TC 2.A.23) family.

The protein resides in the cell inner membrane. It catalyses the reaction L-serine(in) + Na(+)(in) = L-serine(out) + Na(+)(out). The enzyme catalyses L-threonine(in) + Na(+)(in) = L-threonine(out) + Na(+)(out). Involved in the import of serine and threonine into the cell, with the concomitant import of sodium (symport system). The protein is Serine/threonine transporter SstT of Neisseria meningitidis serogroup C (strain 053442).